Reading from the N-terminus, the 623-residue chain is Serine/threonine-protein kinase ArnS (623 aa).

The next 2 helical transmembrane spans lie at 13-33 (MILI…GIVL) and 49-69 (VYLI…QSLI). A Protein kinase domain is found at 317–623 (YRVIEVIGLG…SYDIVKILEG (307 aa)). ATP contacts are provided by residues 323–331 (IGLGGNGYV) and K344. The Proton acceptor role is filled by D460.

Belongs to the protein kinase superfamily. Ser/Thr protein kinase family. Post-translationally, autophosphorylated.

It localises to the cell membrane. It carries out the reaction L-seryl-[protein] + ATP = O-phospho-L-seryl-[protein] + ADP + H(+). It catalyses the reaction L-threonyl-[protein] + ATP = O-phospho-L-threonyl-[protein] + ADP + H(+). With respect to regulation, autophosphorylation is stimulated by Mn(2+). Functionally, plays an essential role in the controlled expression of archaellum components during starvation-induced motility. May inhibit arnR transcription and promote ArnR translation. The chain is Serine/threonine-protein kinase ArnS from Sulfolobus acidocaldarius (strain ATCC 33909 / DSM 639 / JCM 8929 / NBRC 15157 / NCIMB 11770).